Here is a 571-residue protein sequence, read N- to C-terminus: Glutamine--tRNA ligase (571 aa).

Positions 35–45 match the 'HIGH' region motif; the sequence is PEPNGYLHIGH. ATP contacts are provided by residues 36 to 38 and 42 to 48; these read EPN and HIGHAKS. L-glutamine is bound by residues Asp68 and Tyr213. ATP-binding positions include Thr232, 262 to 263, and 270 to 272; these read RL and LSK. Positions 269-273 match the 'KMSKS' region motif; the sequence is ILSKR.

Belongs to the class-I aminoacyl-tRNA synthetase family. In terms of assembly, monomer.

Its subcellular location is the cytoplasm. It catalyses the reaction tRNA(Gln) + L-glutamine + ATP = L-glutaminyl-tRNA(Gln) + AMP + diphosphate. The polypeptide is Glutamine--tRNA ligase (Buchnera aphidicola subsp. Acyrthosiphon pisum (strain Tuc7)).